A 208-amino-acid polypeptide reads, in one-letter code: N-(5'-phosphoribosyl)anthranilate isomerase (208 aa).

Belongs to the TrpF family.

It carries out the reaction N-(5-phospho-beta-D-ribosyl)anthranilate = 1-(2-carboxyphenylamino)-1-deoxy-D-ribulose 5-phosphate. It participates in amino-acid biosynthesis; L-tryptophan biosynthesis; L-tryptophan from chorismate: step 3/5. This Methanococcus maripaludis (strain C7 / ATCC BAA-1331) protein is N-(5'-phosphoribosyl)anthranilate isomerase.